A 299-amino-acid polypeptide reads, in one-letter code: Leucine zipper transcription factor-like protein 1 (299 aa).

A coiled-coil region spans residues 96 to 296 (LKLQTDISEL…DLRKRLAQYE (201 aa)). The interval 145–299 (GTAELLNKEI…KRLAQYEPED (155 aa)) is interaction with BSS9.

The protein belongs to the LZTFL1 family. In terms of assembly, self-associates. Interacts with BBS9; the interaction mediates the association of LZTL1 with the BBsome complex and regulates BBSome ciliary trafficking. In terms of tissue distribution, expressed in prostate, ovary, stomach, pancreas, esophagus, breast, liver, bladder, kidney, thyroid, colon and lung (at protein level). Down-regulated in multiple primary tumors (at protein level). Detected in testis, heart, skeletal muscle, thymus, spleen, small intestine, and peripheral blood leukocytes.

The protein localises to the cytoplasm. Functionally, regulates ciliary localization of the BBSome complex. Together with the BBSome complex, controls SMO ciliary trafficking and contributes to the sonic hedgehog (SHH) pathway regulation. May play a role in neurite outgrowth. May have tumor suppressor function. This is Leucine zipper transcription factor-like protein 1 (LZTFL1) from Homo sapiens (Human).